The following is a 137-amino-acid chain: Large ribosomal subunit protein uL16 (137 aa).

It belongs to the universal ribosomal protein uL16 family. Part of the 50S ribosomal subunit.

Functionally, binds 23S rRNA and is also seen to make contacts with the A and possibly P site tRNAs. The chain is Large ribosomal subunit protein uL16 from Mycoplasma mycoides subsp. mycoides SC (strain CCUG 32753 / NCTC 10114 / PG1).